The chain runs to 232 residues: Thiamine import ATP-binding protein ThiQ (232 aa).

One can recognise an ABC transporter domain in the interval 2–230 (LKLTDITWLY…KASASALLGI (229 aa)). Position 32-39 (32-39 (GPSGAGKS)) interacts with ATP.

The protein belongs to the ABC transporter superfamily. Thiamine importer (TC 3.A.1.19.1) family. As to quaternary structure, the complex is composed of two ATP-binding proteins (ThiQ), two transmembrane proteins (ThiP) and a solute-binding protein (ThiB).

It is found in the cell inner membrane. It catalyses the reaction thiamine(out) + ATP + H2O = thiamine(in) + ADP + phosphate + H(+). Part of the ABC transporter complex ThiBPQ involved in thiamine import. Responsible for energy coupling to the transport system. This is Thiamine import ATP-binding protein ThiQ from Escherichia coli (strain K12).